The following is a 342-amino-acid chain: S-adenosylmethionine:tRNA ribosyltransferase-isomerase (342 aa).

This sequence belongs to the QueA family. As to quaternary structure, monomer.

It localises to the cytoplasm. It catalyses the reaction 7-aminomethyl-7-carbaguanosine(34) in tRNA + S-adenosyl-L-methionine = epoxyqueuosine(34) in tRNA + adenine + L-methionine + 2 H(+). Its pathway is tRNA modification; tRNA-queuosine biosynthesis. Its function is as follows. Transfers and isomerizes the ribose moiety from AdoMet to the 7-aminomethyl group of 7-deazaguanine (preQ1-tRNA) to give epoxyqueuosine (oQ-tRNA). This chain is S-adenosylmethionine:tRNA ribosyltransferase-isomerase, found in Streptococcus pneumoniae (strain Hungary19A-6).